Consider the following 326-residue polypeptide: Flotillin-like protein FloA (326 aa).

Residues 3–23 (FTTIVVILLVIACIVVLFFIG) form a helical membrane-spanning segment.

The protein belongs to the flotillin-like FloA family. As to quaternary structure, homooligomerizes.

It localises to the cell membrane. It is found in the membrane raft. In terms of biological role, found in functional membrane microdomains (FMM) that may be equivalent to eukaryotic membrane rafts. FMMs are highly dynamic and increase in number as cells age. Flotillins are thought to be important factors in membrane fluidity. This is Flotillin-like protein FloA from Desulforapulum autotrophicum (strain ATCC 43914 / DSM 3382 / VKM B-1955 / HRM2) (Desulfobacterium autotrophicum).